The sequence spans 183 residues: Holliday junction branch migration complex subunit RuvA (183 aa).

A domain I region spans residues 1–63 (MIVGLIGVVE…EDAHLLYGFL (63 aa)). The segment at 64 to 139 (EESEKILFER…FFIQDENRPA (76 aa)) is domain II. Position 139 (A139) is a region of interest, flexible linker. Residues 139 to 183 (ARNEVFLALESLGFKSAEINPVLKTLKPHLSIEAAIKEALQQLRS) are domain III.

The protein belongs to the RuvA family. In terms of assembly, homotetramer. Forms an RuvA(8)-RuvB(12)-Holliday junction (HJ) complex. HJ DNA is sandwiched between 2 RuvA tetramers; dsDNA enters through RuvA and exits via RuvB. An RuvB hexamer assembles on each DNA strand where it exits the tetramer. Each RuvB hexamer is contacted by two RuvA subunits (via domain III) on 2 adjacent RuvB subunits; this complex drives branch migration. In the full resolvosome a probable DNA-RuvA(4)-RuvB(12)-RuvC(2) complex forms which resolves the HJ.

It is found in the cytoplasm. Its function is as follows. The RuvA-RuvB-RuvC complex processes Holliday junction (HJ) DNA during genetic recombination and DNA repair, while the RuvA-RuvB complex plays an important role in the rescue of blocked DNA replication forks via replication fork reversal (RFR). RuvA specifically binds to HJ cruciform DNA, conferring on it an open structure. The RuvB hexamer acts as an ATP-dependent pump, pulling dsDNA into and through the RuvAB complex. HJ branch migration allows RuvC to scan DNA until it finds its consensus sequence, where it cleaves and resolves the cruciform DNA. The protein is Holliday junction branch migration complex subunit RuvA of Helicobacter pylori (strain J99 / ATCC 700824) (Campylobacter pylori J99).